Here is a 313-residue protein sequence, read N- to C-terminus: N-acetyl-gamma-glutamyl-phosphate reductase 2 (313 aa).

Residue cysteine 117 is part of the active site.

It belongs to the NAGSA dehydrogenase family. Type 2 subfamily.

It is found in the cytoplasm. It carries out the reaction N-acetyl-L-glutamate 5-semialdehyde + phosphate + NADP(+) = N-acetyl-L-glutamyl 5-phosphate + NADPH + H(+). Its pathway is amino-acid biosynthesis; L-arginine biosynthesis; N(2)-acetyl-L-ornithine from L-glutamate: step 3/4. In terms of biological role, catalyzes the NADPH-dependent reduction of N-acetyl-5-glutamyl phosphate to yield N-acetyl-L-glutamate 5-semialdehyde. In Pseudomonas putida (strain ATCC 47054 / DSM 6125 / CFBP 8728 / NCIMB 11950 / KT2440), this protein is N-acetyl-gamma-glutamyl-phosphate reductase 2.